The sequence spans 573 residues: 2-succinyl-5-enolpyruvyl-6-hydroxy-3-cyclohexene-1-carboxylate synthase (573 aa).

Belongs to the TPP enzyme family. MenD subfamily. Homodimer. The cofactor is Mg(2+). It depends on Mn(2+) as a cofactor. Requires thiamine diphosphate as cofactor.

It catalyses the reaction isochorismate + 2-oxoglutarate + H(+) = 5-enolpyruvoyl-6-hydroxy-2-succinyl-cyclohex-3-ene-1-carboxylate + CO2. It participates in quinol/quinone metabolism; 1,4-dihydroxy-2-naphthoate biosynthesis; 1,4-dihydroxy-2-naphthoate from chorismate: step 2/7. The protein operates within quinol/quinone metabolism; menaquinone biosynthesis. Catalyzes the thiamine diphosphate-dependent decarboxylation of 2-oxoglutarate and the subsequent addition of the resulting succinic semialdehyde-thiamine pyrophosphate anion to isochorismate to yield 2-succinyl-5-enolpyruvyl-6-hydroxy-3-cyclohexene-1-carboxylate (SEPHCHC). The sequence is that of 2-succinyl-5-enolpyruvyl-6-hydroxy-3-cyclohexene-1-carboxylate synthase from Shewanella sp. (strain W3-18-1).